Here is a 188-residue protein sequence, read N- to C-terminus: GMP synthase [glutamine-hydrolyzing] subunit A (188 aa).

Residues 1 to 188 form the Glutamine amidotransferase type-1 domain; that stretch reads MIIIMDNGGQ…RNFAKICGEL (188 aa). The active-site Nucleophile is the Cys-78. Residues His-165 and Glu-167 contribute to the active site.

In terms of assembly, heterodimer composed of a glutamine amidotransferase subunit (A) and a GMP-binding subunit (B).

The enzyme catalyses XMP + L-glutamine + ATP + H2O = GMP + L-glutamate + AMP + diphosphate + 2 H(+). It functions in the pathway purine metabolism; GMP biosynthesis; GMP from XMP (L-Gln route): step 1/1. Its function is as follows. Catalyzes the synthesis of GMP from XMP. This Pyrococcus furiosus (strain ATCC 43587 / DSM 3638 / JCM 8422 / Vc1) protein is GMP synthase [glutamine-hydrolyzing] subunit A.